We begin with the raw amino-acid sequence, 532 residues long: Eukaryotic translation initiation factor 3 subunit D (532 aa).

The interval 108–161 is disordered; sequence ATVLKTRGGAPRGGSFAGRGGSQRGGRFQNQPGRGPVGGQRGPNPRFGKSKFGW. Positions 117 to 131 are enriched in gly residues; the sequence is APRGGSFAGRGGSQR. Positions 132-141 are enriched in low complexity; the sequence is GGRFQNQPGR. Residues 296-310 are RNA gate; it reads PLDFITVDENAADPP.

This sequence belongs to the eIF-3 subunit D family. Component of the eukaryotic translation initiation factor 3 (eIF-3) complex.

The protein localises to the cytoplasm. Functionally, mRNA cap-binding component of the eukaryotic translation initiation factor 3 (eIF-3) complex, which is involved in protein synthesis of a specialized repertoire of mRNAs and, together with other initiation factors, stimulates binding of mRNA and methionyl-tRNAi to the 40S ribosome. The eIF-3 complex specifically targets and initiates translation of a subset of mRNAs involved in cell proliferation. In the eIF-3 complex, eif3d specifically recognizes and binds the 7-methylguanosine cap of a subset of mRNAs. The sequence is that of Eukaryotic translation initiation factor 3 subunit D from Yarrowia lipolytica (strain CLIB 122 / E 150) (Yeast).